We begin with the raw amino-acid sequence, 322 residues long: Zinc finger C2HC domain-containing protein CBG14627 (322 aa).

2 C2HC/C3H-type zinc fingers span residues 9–38 (PVYP…LATL) and 119–148 (DYVQ…QTTR). Zn(2+) contacts are provided by C13, C16, H28, C32, C123, C126, H138, and C142. Residues 144-322 (EQTTRKQGGK…SRNNSRSRIF (179 aa)) form a disordered region. The span at 148-168 (RKQGGKSSAGNRGLTSNNYRS) shows a compositional bias: polar residues. Residues 171 to 219 (SKHEGRKQESSSRNGSAERKTTTRGRDGSLSRARRDDSNDLTNRRKSLE) show a composition bias toward basic and acidic residues. Residues 220 to 238 (TRSQLTTGQANNRTTSLSA) are compositionally biased toward polar residues. A compositionally biased stretch (low complexity) spans 278–294 (TTTTASASRSGSGSSSR). The segment covering 296 to 305 (RTRDESRESR) has biased composition (basic and acidic residues). The segment covering 311-322 (SNSRNNSRSRIF) has biased composition (low complexity).

The protein belongs to the ZC2HC1 family. Zn(2+) is required as a cofactor.

The polypeptide is Zinc finger C2HC domain-containing protein CBG14627 (Caenorhabditis briggsae).